A 501-amino-acid chain; its full sequence is Lysine--tRNA ligase (501 aa).

2 residues coordinate Mg(2+): glutamate 411 and glutamate 418.

Belongs to the class-II aminoacyl-tRNA synthetase family. As to quaternary structure, homodimer. Requires Mg(2+) as cofactor.

The protein resides in the cytoplasm. The catalysed reaction is tRNA(Lys) + L-lysine + ATP = L-lysyl-tRNA(Lys) + AMP + diphosphate. This is Lysine--tRNA ligase from Thiobacillus denitrificans (strain ATCC 25259 / T1).